The chain runs to 121 residues: Large ribosomal subunit protein uL14c (121 aa).

It belongs to the universal ribosomal protein uL14 family. Part of the 50S ribosomal subunit.

It is found in the plastid. The protein localises to the chloroplast. Its function is as follows. Binds to 23S rRNA. This is Large ribosomal subunit protein uL14c from Nephroselmis olivacea (Green alga).